Here is a 347-residue protein sequence, read N- to C-terminus: NADH-ubiquinone oxidoreductase chain 2 (347 aa).

The next 11 membrane-spanning stretches (helical) occupy residues 1-21, 25-45, 59-79, 96-116, 122-142, 145-165, 178-198, 201-221, 237-257, 276-296, and 326-346; these read MNPL…MIVM, HWLT…PILM, YFLT…INLL, IIMT…FWVP, IQLS…MSIL, IFPT…VAIG, IMAY…AYNP, TLLN…MFML, APLL…LPPL, IITP…YMRL, and VSPL…LMLL.

It belongs to the complex I subunit 2 family. In terms of assembly, core subunit of respiratory chain NADH dehydrogenase (Complex I) which is composed of 45 different subunits. Interacts with TMEM242.

The protein resides in the mitochondrion inner membrane. It catalyses the reaction a ubiquinone + NADH + 5 H(+)(in) = a ubiquinol + NAD(+) + 4 H(+)(out). Functionally, core subunit of the mitochondrial membrane respiratory chain NADH dehydrogenase (Complex I) which catalyzes electron transfer from NADH through the respiratory chain, using ubiquinone as an electron acceptor. Essential for the catalytic activity and assembly of complex I. This chain is NADH-ubiquinone oxidoreductase chain 2, found in Boneia bidens (Manado fruit bat).